A 611-amino-acid chain; its full sequence is Major facilitator superfamily domain-containing protein YCR023C (611 aa).

Topologically, residues 1–89 are extracellular; the sequence is MARQKLTFKE…GRFSEKHGRK (89 aa). A helical membrane pass occupies residues 90-110; the sequence is ITLTCGLIGTSVSLLILGFSR. The Cytoplasmic segment spans residues 111-152; the sequence is NFYQALVARSLMGLLNGNVGVIRTIIGEIATERKHQALAFST. The chain crosses the membrane as a helical span at residues 153–173; it reads MPLLFQFGAVVGPMIGGFLVF. Over 174-199 the chain is Extracellular; that stretch reads RDGTMNEVPLWFPHFAKRIIRSYPYA. The helical transmembrane segment at 200 to 220 threads the bilayer; the sequence is LPNVVVCMFLMFGLTNATLFL. Residues 221-353 are Cytoplasmic-facing; it reads EETHPAFKDR…SIFHHVFHTK (133 aa). Residues 261–271 show a composition bias toward basic and acidic residues; it reads DDSENIHHRNE. The disordered stretch occupies residues 261-301; the sequence is DDSENIHHRNENVNSIRGQDSEEDENSPLVNTTNDDDTESI. Phosphoserine is present on Ser-313. A helical membrane pass occupies residues 354–372; sequence VFYPISVNFIMALHLIVYN. Topologically, residues 373–413 are extracellular; sequence EFLPVFLAYDLAVDPENPKKLASKFPWKISGGIGYEPEQTG. Residues 414 to 434 traverse the membrane as a helical segment; that stretch reads TLLSTTGIFGCFVVIFIFPIV. At 435-442 the chain is on the cytoplasmic side; sequence DRNFDCLT. The helical transmembrane segment at 443-463 threads the bilayer; that stretch reads IFRTLVKLYPIMYVMVPYVVF. The Extracellular portion of the chain corresponds to 464-542; sequence LQNERIPSWY…YIMSWSQQND (79 aa). The chain crosses the membrane as a helical span at residues 543–563; that stretch reads VAWVSWWSLSLFCMVALYQSY. The Cytoplasmic portion of the chain corresponds to 564–611; sequence KIAPIDDNENELHGQGSEDAYNSQSQSSDLRMAHRSSLSSLSNQRCTT. At Ser-603 the chain carries Phosphoserine.

Belongs to the major facilitator superfamily.

The protein resides in the membrane. The enzyme catalyses chloride(in) = chloride(out). In terms of biological role, outward-rectifying chloride channel involved in chloride homeostasis. This chain is Major facilitator superfamily domain-containing protein YCR023C, found in Saccharomyces cerevisiae (strain ATCC 204508 / S288c) (Baker's yeast).